Reading from the N-terminus, the 615-residue chain is Dihydroxy-acid dehydratase (615 aa).

Residue D83 participates in Mg(2+) binding. C124 is a binding site for [2Fe-2S] cluster. Mg(2+)-binding residues include D125 and K126. At K126 the chain carries N6-carboxylysine. C199 contacts [2Fe-2S] cluster. E495 is a binding site for Mg(2+). The active-site Proton acceptor is S521.

It belongs to the IlvD/Edd family. As to quaternary structure, homodimer. [2Fe-2S] cluster serves as cofactor. It depends on Mg(2+) as a cofactor.

The catalysed reaction is (2R)-2,3-dihydroxy-3-methylbutanoate = 3-methyl-2-oxobutanoate + H2O. The enzyme catalyses (2R,3R)-2,3-dihydroxy-3-methylpentanoate = (S)-3-methyl-2-oxopentanoate + H2O. Its pathway is amino-acid biosynthesis; L-isoleucine biosynthesis; L-isoleucine from 2-oxobutanoate: step 3/4. The protein operates within amino-acid biosynthesis; L-valine biosynthesis; L-valine from pyruvate: step 3/4. Functionally, functions in the biosynthesis of branched-chain amino acids. Catalyzes the dehydration of (2R,3R)-2,3-dihydroxy-3-methylpentanoate (2,3-dihydroxy-3-methylvalerate) into 2-oxo-3-methylpentanoate (2-oxo-3-methylvalerate) and of (2R)-2,3-dihydroxy-3-methylbutanoate (2,3-dihydroxyisovalerate) into 2-oxo-3-methylbutanoate (2-oxoisovalerate), the penultimate precursor to L-isoleucine and L-valine, respectively. The protein is Dihydroxy-acid dehydratase of Corynebacterium jeikeium (strain K411).